A 1127-amino-acid chain; its full sequence is Zinc finger protein basonuclin-2 (1127 aa).

The interval 44–67 is disordered; sequence SEEAEVDVRERDTQRDREPKRARD. The span at 49–67 shows a compositional bias: basic and acidic residues; it reads VDVRERDTQRDREPKRARD. Residue Lys-305 forms a Glycyl lysine isopeptide (Lys-Gly) (interchain with G-Cter in SUMO2) linkage. The segment at 386–450 is disordered; sequence STQNEYNESS…DLSKTEHPKS (65 aa). A compositionally biased stretch (low complexity) spans 389–400; it reads NEYNESSESEVS. Polar residues predominate over residues 403-422; the sequence is PYKSDQTPNRNALTSITNVE. Glycyl lysine isopeptide (Lys-Gly) (interchain with G-Cter in SUMO2) cross-links involve residues Lys-424, Lys-444, and Lys-449. The segment at 469–492 adopts a C2H2-type 1 zinc-finger fold; sequence VFCNACGKTFYDKGTLKIHYNAVH. Ser-589 is subject to Phosphoserine. Lys-669 is covalently cross-linked (Glycyl lysine isopeptide (Lys-Gly) (interchain with G-Cter in SUMO2)). Positions 675 to 772 are disordered; that stretch reads IDTADEFDDE…EESMEGDEHL (98 aa). Acidic residues predominate over residues 676 to 689; that stretch reads DTADEFDDEDDDPN. 2 stretches are compositionally biased toward basic and acidic residues: residues 698-708 and 747-772; these read MSHDNHCHSQD and ERDY…DEHL. The segment at 861 to 884 adopts a C2H2-type 2 zinc-finger fold; that stretch reads KICYVCKKSFKSSYSVKLHYRNVH. Residues Lys-922 and Lys-947 each participate in a glycyl lysine isopeptide (Lys-Gly) (interchain with G-Cter in SUMO2) cross-link. Disordered stretches follow at residues 955–976 and 996–1041; these read LGLD…HLNG and LQSS…TLPG. Residues 1010–1023 show a composition bias toward acidic residues; sequence AGSDEGILLDDIDG. C2H2-type zinc fingers lie at residues 1063 to 1086 and 1091 to 1118; these read IMCN…KTVH and HKCK…PNLH. Residues 1107 to 1127 form a disordered region; it reads SRNRHSQNPNLHKNIPFTSID.

Highly expressed in ovary, testis and kidney. Expressed at moderate levels in skin and small intestine, and at lower levels in lung. Trace amounts of expression detected in liver and colon. Not detected in brain, spleen or thymus.

The protein localises to the nucleus. Its function is as follows. Probable transcription factor specific for skin keratinocytes. May play a role in the differentiation of spermatozoa and oocytes. May also play an important role in early urinary-tract development. The protein is Zinc finger protein basonuclin-2 of Mus musculus (Mouse).